A 355-amino-acid polypeptide reads, in one-letter code: Ornithine transcarbamylase, mitochondrial (355 aa).

A mitochondrion-targeting transit peptide spans 1–35; sequence MLFINLRTLLNNAALRNGHNFVVRNFRCGQPVQDK. An N6-acetyllysine; alternate modification is found at Lys71. The residue at position 71 (Lys71) is an N6-succinyllysine; alternate. The residue at position 81 (Lys81) is an N6-succinyllysine. Lys89 carries the N6-acetyllysine; alternate modification. Lys89 carries the post-translational modification N6-succinyllysine; alternate. 91-95 is a binding site for carbamoyl phosphate; the sequence is STRTR. The residue at position 134 (Ser134) is a Phosphoserine. Arg142 contacts carbamoyl phosphate. Residue Arg142 coordinates L-ornithine. Lys145 is modified (N6-acetyllysine; alternate). The residue at position 145 (Lys145) is an N6-succinyllysine; alternate. Position 169 (His169) interacts with carbamoyl phosphate. Asn200 contacts L-ornithine. N6-acetyllysine; alternate occurs at positions 222, 232, and 239. An N6-succinyllysine; alternate mark is found at Lys222, Lys232, and Lys239. N6-acetyllysine is present on Lys244. Residue 264–268 participates in L-ornithine binding; the sequence is DTWIS. Lys275 and Lys290 each carry N6-succinyllysine. Position 293 is an N6-acetyllysine; alternate (Lys293). Lys293 bears the N6-succinyllysine; alternate mark. L-ornithine is bound at residue 303 to 306; it reads HCLP. Cys304 is a catalytic residue. An N6-acetyllysine; alternate modification is found at Lys308. Lys308 carries the post-translational modification N6-succinyllysine; alternate. Arg331 contacts carbamoyl phosphate. Arg331 is a binding site for L-ornithine.

Belongs to the aspartate/ornithine carbamoyltransferase superfamily. OTCase family. In terms of assembly, homotrimer. Post-translationally, acetylation at Lys-89 negatively regulates ornithine carbamoyltransferase activity in response to nutrient signals.

Its subcellular location is the mitochondrion matrix. The catalysed reaction is carbamoyl phosphate + L-ornithine = L-citrulline + phosphate + H(+). The protein operates within nitrogen metabolism; urea cycle; L-citrulline from L-ornithine and carbamoyl phosphate: step 1/1. With respect to regulation, negatively regulated by lysine acetylation. Catalyzes the second step of the urea cycle, the condensation of carbamoyl phosphate with L-ornithine to form L-citrulline. The urea cycle ensures the detoxification of ammonia by converting it to urea for excretion. The chain is Ornithine transcarbamylase, mitochondrial from Ovis aries (Sheep).